Here is a 195-residue protein sequence, read N- to C-terminus: uncharacterized protein (195 aa).

Residues 86 to 158 (LPSEGGWTSG…PAPVSGEPPE (73 aa)) form a disordered region.

This is an uncharacterized protein from Homo sapiens (Human).